A 304-amino-acid polypeptide reads, in one-letter code: Small glutamine-rich tetratricopeptide repeat-containing protein beta (304 aa).

4 TPR repeats span residues 15-49 (LREQ…SPED), 85-118 (ADQL…DPNN), 119-152 (AVYY…DSKY), and 153-186 (SKAY…DPEN). N6-acetyllysine is present on lysine 131. Serine 293, serine 295, and serine 297 each carry phosphoserine.

The protein belongs to the SGT family. In terms of assembly, homooligomerize.

Functionally, co-chaperone that binds directly to HSC70 and HSP70 and regulates their ATPase activity. This Homo sapiens (Human) protein is Small glutamine-rich tetratricopeptide repeat-containing protein beta (SGTB).